The primary structure comprises 361 residues: ETS translocation variant 3-like protein (361 aa).

Positions 39 to 120 (IQLWHFILEL…KGKRFTYKFN (82 aa)) form a DNA-binding region, ETS. Residues 178–201 (LTGQQTPRGPPETSGDKKGSSSSV) are disordered.

This sequence belongs to the ETS family.

The protein resides in the nucleus. Transcriptional regulator. In Homo sapiens (Human), this protein is ETS translocation variant 3-like protein (ETV3L).